The following is a 187-amino-acid chain: GTP cyclohydrolase 1 (187 aa).

Zn(2+)-binding residues include cysteine 76, histidine 79, and cysteine 148.

It belongs to the GTP cyclohydrolase I family. As to quaternary structure, homomer.

It carries out the reaction GTP + H2O = 7,8-dihydroneopterin 3'-triphosphate + formate + H(+). The protein operates within cofactor biosynthesis; 7,8-dihydroneopterin triphosphate biosynthesis; 7,8-dihydroneopterin triphosphate from GTP: step 1/1. The polypeptide is GTP cyclohydrolase 1 (Desulforamulus reducens (strain ATCC BAA-1160 / DSM 100696 / MI-1) (Desulfotomaculum reducens)).